The sequence spans 652 residues: Large subunit GTPase 1 homolog (652 aa).

The residue at position 93 (Ser-93) is a Phosphoserine. The 275-residue stretch at 164 to 438 folds into the CP-type G domain; sequence WRQLWRVIER…LCDCPGLVMP (275 aa). GTP is bound at residue 212–215; sequence NKAD. Residue Ser-252 is modified to Phosphoserine. The interval 288 to 347 is disordered; it reads LGEAASSEEDESEYEDCQEEEEDWQTCLEDSSSSDEEACGQDCKEGHTVDSEAQGRNTPQ. The segment covering 293 to 311 has biased composition (acidic residues); the sequence is SSEEDESEYEDCQEEEEDW. Residues 387–394 and 431–434 each bind GTP; these read GYPNVGKS and DCPG. Residues 625–652 are disordered; that stretch reads RGAGKPWKKHGNRNKKEKSRRLYKHLDM. Residues 630–652 are compositionally biased toward basic residues; that stretch reads PWKKHGNRNKKEKSRRLYKHLDM.

It belongs to the TRAFAC class YlqF/YawG GTPase family. LSG1 subfamily.

The protein localises to the cytoplasm. Its subcellular location is the endoplasmic reticulum. It localises to the nucleus. It is found in the cajal body. It carries out the reaction GTP + H2O = GDP + phosphate + H(+). Functions as a GTPase. May act by mediating the release of NMD3 from the 60S ribosomal subunit after export into the cytoplasm during the 60S ribosomal subunit maturation. The chain is Large subunit GTPase 1 homolog from Bos taurus (Bovine).